The primary structure comprises 204 residues: Abscisic acid receptor PYL3 (204 aa).

An START-like region spans residues 40–191; sequence HEPRDHQCSS…NLKSLAEVSE (152 aa). Cys-47 and Cys-172 are joined by a disulfide. Abscisate-binding positions include Lys-76, 104–109, 131–137, and Glu-156; these read ATRSTE and RLKNYSS. Positions 100–104 match the Gate loop motif; the sequence is SGLPA. The short motif at 130–132 is the Latch loop element; that stretch reads HRL.

Belongs to the PYR/PYL/RCAR abscisic acid intracellular receptor family. Monomer. Interacts with PP2C50. Binding to PP2C50 is dependent on the presence of abscisic acid (ABA). Interacts with PP2C30 and PP2C53.

Its subcellular location is the cytoplasm. The protein resides in the cytosol. It is found in the nucleus. Its function is as follows. Involved in abscisic acid (ABA) signaling during seed germination and abiotic stress response. Acts as a positive regulator of ABA-mediated inhibition of seed germination, and tolerance to drought and cold stresses. Together with PP2C50 and SAPK10, may form an ABA signaling module involved in stress response. Inhibits the protein phosphatases PP2C06 and PP2C09 when activated by abscisic acid (ABA). In Oryza sativa subsp. japonica (Rice), this protein is Abscisic acid receptor PYL3.